The following is a 385-amino-acid chain: Exopolygalacturonase rpg15 (385 aa).

The N-terminal stretch at 1 to 26 (MVRFISFTSPIAALLLLSFGVKHAST) is a signal peptide. N143, N161, N164, and N180 each carry an N-linked (GlcNAc...) asparagine glycan. PbH1 repeat units lie at residues 165 to 195 (STNL…DLYH), 196 to 217 (SSGI…AIKE), 219 to 241 (VEKV…GSLG), and 249 to 270 (VKHV…RVKT). D210 serves as the catalytic Proton donor. Cysteines 212 and 229 form a disulfide. N226 carries N-linked (GlcNAc...) asparagine glycosylation. Residue H233 is part of the active site. 3 N-linked (GlcNAc...) asparagine glycosylation sites follow: N256, N319, and N343. A disulfide bridge connects residues C344 and C350. Residues 350 to 376 (CSDITFSGIDITKASNTTDNVCVYLEG) form a PbH1 5 repeat. N365 carries N-linked (GlcNAc...) asparagine glycosylation.

The protein belongs to the glycosyl hydrolase 28 family. Post-translationally, N-glycosylated.

The protein resides in the secreted. The catalysed reaction is [(1-&gt;4)-alpha-D-galacturonosyl](n) + H2O = alpha-D-galacturonate + [(1-&gt;4)-alpha-D-galacturonosyl](n-1). Specific in hydrolyzing the terminal glycosidic bond of polygalacturonic acid and oligogalacturonates. The sequence is that of Exopolygalacturonase rpg15 from Rhizopus delemar (strain RA 99-880 / ATCC MYA-4621 / FGSC 9543 / NRRL 43880) (Mucormycosis agent).